The sequence spans 299 residues: Probable lipid kinase YegS (299 aa).

Residues 2–133 (AEFPASLLIL…IDMAQVNKQT (132 aa)) enclose the DAGKc domain. ATP contacts are provided by residues threonine 40, 66 to 72 (GDGTINE), and threonine 95. Leucine 215, aspartate 218, and leucine 220 together coordinate Mg(2+). Catalysis depends on glutamate 271, which acts as the Proton acceptor.

Belongs to the diacylglycerol/lipid kinase family. YegS lipid kinase subfamily. Mg(2+) is required as a cofactor. Ca(2+) serves as cofactor.

The protein resides in the cytoplasm. In terms of biological role, probably phosphorylates lipids; the in vivo substrate is unknown. This is Probable lipid kinase YegS from Shigella boydii serotype 18 (strain CDC 3083-94 / BS512).